A 249-amino-acid polypeptide reads, in one-letter code: Quinate/shikimate dehydrogenase (249 aa).

Substrate-binding residues include Lys-32 and Asp-68. NAD(+) contacts are provided by residues 93 to 96 (AGGA), 116 to 119 (NRRD), Lys-166, 193 to 196 (CVYN), and Gly-216.

The protein belongs to the shikimate dehydrogenase family. As to quaternary structure, homodimer.

It catalyses the reaction L-quinate + NAD(+) = 3-dehydroquinate + NADH + H(+). It carries out the reaction L-quinate + NADP(+) = 3-dehydroquinate + NADPH + H(+). The enzyme catalyses shikimate + NADP(+) = 3-dehydroshikimate + NADPH + H(+). The catalysed reaction is shikimate + NAD(+) = 3-dehydroshikimate + NADH + H(+). Its pathway is metabolic intermediate biosynthesis; chorismate biosynthesis; chorismate from D-erythrose 4-phosphate and phosphoenolpyruvate: step 4/7. In terms of biological role, the actual biological function of YdiB remains unclear, nor is it known whether 3-dehydroshikimate or quinate represents the natural substrate. Catalyzes the reversible NAD-dependent reduction of both 3-dehydroshikimate (DHSA) and 3-dehydroquinate to yield shikimate (SA) and quinate, respectively. It can use both NAD or NADP for catalysis, however it has higher catalytic efficiency with NAD. In Shigella flexneri serotype 5b (strain 8401), this protein is Quinate/shikimate dehydrogenase.